The primary structure comprises 435 residues: tRNA(Ile)-lysidine synthase (435 aa).

24–29 (SGGLDS) provides a ligand contact to ATP.

The protein belongs to the tRNA(Ile)-lysidine synthase family.

The protein localises to the cytoplasm. The catalysed reaction is cytidine(34) in tRNA(Ile2) + L-lysine + ATP = lysidine(34) in tRNA(Ile2) + AMP + diphosphate + H(+). In terms of biological role, ligates lysine onto the cytidine present at position 34 of the AUA codon-specific tRNA(Ile) that contains the anticodon CAU, in an ATP-dependent manner. Cytidine is converted to lysidine, thus changing the amino acid specificity of the tRNA from methionine to isoleucine. This chain is tRNA(Ile)-lysidine synthase, found in Chromobacterium violaceum (strain ATCC 12472 / DSM 30191 / JCM 1249 / CCUG 213 / NBRC 12614 / NCIMB 9131 / NCTC 9757 / MK).